The chain runs to 465 residues: Pancreatic triacylglycerol lipase (465 aa).

Residues Met1–Gly16 form the signal peptide. Intrachain disulfides connect Cys20–Cys26 and Cys107–Cys118. Catalysis depends on Ser169, which acts as the Nucleophile. Asn183 is a glycosylation site (N-linked (GlcNAc...) asparagine). Asp193 serves as the catalytic Charge relay system. Glu204, Arg207, Asp209, and Asp212 together coordinate Ca(2+). Cys254 and Cys278 are disulfide-bonded. The active-site Charge relay system is His280. 3 disulfides stabilise this stretch: Cys302/Cys313, Cys316/Cys321, and Cys449/Cys465. The region spanning Trp355–Cys465 is the PLAT domain.

This sequence belongs to the AB hydrolase superfamily. Lipase family. In terms of assembly, forms a 1:1 stoichiometric complex with (pro)colipase/CLPS.

The protein localises to the secreted. It carries out the reaction a triacylglycerol + H2O = a diacylglycerol + a fatty acid + H(+). It catalyses the reaction 1,2,3-tributanoylglycerol + H2O = dibutanoylglycerol + butanoate + H(+). The enzyme catalyses 1,2,3-tri-(9Z-octadecenoyl)-glycerol + H2O = di-(9Z)-octadecenoylglycerol + (9Z)-octadecenoate + H(+). The catalysed reaction is all-trans-retinyl hexadecanoate + H2O = all-trans-retinol + hexadecanoate + H(+). It carries out the reaction 1,2-di-(9Z-octadecenoyl)-glycerol + H2O = (9Z-octadecenoyl)-glycerol + (9Z)-octadecenoate + H(+). With respect to regulation, inhibited by bile salts, is reactivated by (pro)colipase/CLPS. Its function is as follows. Plays an important role in fat metabolism. It preferentially splits the esters of long-chain fatty acids at positions 1 and 3, producing mainly 2-monoacylglycerol and free fatty acids, and shows considerably higher activity against insoluble emulsified substrates than against soluble ones. This chain is Pancreatic triacylglycerol lipase, found in Homo sapiens (Human).